We begin with the raw amino-acid sequence, 557 residues long: MDIKRSILLVALAVVSYLLVLQWNQDYGQAALPPQNAVAQSASPALPETVPGDSSTSADVPTAGSGNQVPDSAASTAGSDLIQVRTDVLEVAIDPRGGDIVQLKLPKFPRRQDHPEIPFQLFDNGSERLYLAQSGLTGTNGPDARADGRPLYVSEQRSYQLADGQDSLVVDLKFSDGGVDYVKRFTFKRGAYDLEVRHQIANHSEQPWSGNLFAQLKRDASADPSSTTATGTATYLGAALWTSEEPYRKVSMGDMDDKNLRETVQGGWVAWLQHYFVTAWVPNKDDTNLVATRKDSQGNYIIGFTGSTLNIPAGATGETVTRLYAGPKDQNQLEALSPGLELTVDYGFLWFIAQPIFWLLELIHALLGNWGWSIIVLTVIIKLAFFPLSAASYRSMGRMRAVAPKLQALKEQHGEDRQKLSQAMMELYKKEKINPLGGCLPILVQMPVFLALYWVLLESVEMRQAPWLGWITDLSVKDPYFILPIIMGATMFFQQTLNPTPPDPMQARVMKLMPIIFTFFFLWFPAGLVLYWVVNNVLSIGQQWYITRQIEKAAQLA.

The chain crosses the membrane as a helical span at residues 7-27 (ILLVALAVVSYLLVLQWNQDY). A disordered region spans residues 42–77 (ASPALPETVPGDSSTSADVPTAGSGNQVPDSAASTA). Residues 52–77 (GDSSTSADVPTAGSGNQVPDSAASTA) show a composition bias toward polar residues. 3 helical membrane passes run 370–390 (WGWS…PLSA), 436–456 (LGGC…YWVL), and 514–534 (PIIF…YWVV).

Belongs to the OXA1/ALB3/YidC family. Type 1 subfamily. In terms of assembly, interacts with the Sec translocase complex via SecD. Specifically interacts with transmembrane segments of nascent integral membrane proteins during membrane integration.

Its subcellular location is the cell inner membrane. Functionally, required for the insertion and/or proper folding and/or complex formation of integral membrane proteins into the membrane. Involved in integration of membrane proteins that insert both dependently and independently of the Sec translocase complex, as well as at least some lipoproteins. Aids folding of multispanning membrane proteins. The polypeptide is Membrane protein insertase YidC (Azotobacter vinelandii (strain DJ / ATCC BAA-1303)).